The primary structure comprises 255 residues: Arginine-binding extracellular protein ArtP (255 aa).

An N-terminal signal peptide occupies residues 1 to 19 (MKKWLLLLVAACITFALTA). A lipid anchor (N-palmitoyl cysteine) is attached at cysteine 20. Cysteine 20 carries S-diacylglycerol cysteine lipidation.

It belongs to the bacterial solute-binding protein 3 family.

Its subcellular location is the cell membrane. Its function is as follows. Part of a binding-protein-dependent transport system for arginine. This is Arginine-binding extracellular protein ArtP (artP) from Bacillus subtilis (strain 168).